The following is a 101-amino-acid chain: NADH-quinone oxidoreductase subunit K (101 aa).

3 helical membrane-spanning segments follow: residues 4-24, 30-50, and 62-82; these read LGHL…GIFL, IVLL…FIAF, and FVFF…AILV.

It belongs to the complex I subunit 4L family. NDH-1 is composed of 14 different subunits. Subunits NuoA, H, J, K, L, M, N constitute the membrane sector of the complex.

It localises to the cell inner membrane. It carries out the reaction a quinone + NADH + 5 H(+)(in) = a quinol + NAD(+) + 4 H(+)(out). NDH-1 shuttles electrons from NADH, via FMN and iron-sulfur (Fe-S) centers, to quinones in the respiratory chain. The immediate electron acceptor for the enzyme in this species is believed to be ubiquinone. Couples the redox reaction to proton translocation (for every two electrons transferred, four hydrogen ions are translocated across the cytoplasmic membrane), and thus conserves the redox energy in a proton gradient. The polypeptide is NADH-quinone oxidoreductase subunit K (Xanthomonas axonopodis pv. citri (strain 306)).